The chain runs to 392 residues: Ceramide synthase 5 (392 aa).

At 1–46 (MATAAQGPLSLLWGWLWSERFWLPENVSWADLEGPADGYGYPRGRH) the chain is on the lumenal side. Asparagine 26 carries N-linked (GlcNAc...) asparagine glycosylation. The chain crosses the membrane as a helical span at residues 47-67 (ILSVFPLAAGIFFVRLLFERF). The interval 75–136 (CIGIEDSGPY…RHRRNQDKPP (62 aa)) is homeobox-like. In terms of domain architecture, TLC spans 139-340 (TKFCESMWRF…IARIALKALI (202 aa)). A run of 4 helical transmembrane segments spans residues 148–168 (FTFY…SPWF), 183–203 (LSSG…SLMF), 214–234 (FLIM…SYIN), and 272–292 (LFVI…PFWI). The Last loop motif signature appears at 299–309 (ESWEIIGPYAS). Residues 311-331 (WLLNGLLLTLQLLHVIWSYLI) traverse the membrane as a helical segment. The Cytoplasmic portion of the chain corresponds to 332–392 (ARIALKALIR…HMGGSYWAEE (61 aa)). The disordered stretch occupies residues 349–392 (RSDVESSSEEEDVTTCTKSPCDSSSSNGANRVNGHMGGSYWAEE). The span at 362–378 (TTCTKSPCDSSSSNGAN) shows a compositional bias: polar residues.

In terms of assembly, interacts with PAQR4; the interaction regulates the stability and activity of CERS5 and is inhibited in presence of ceramides. Phosphorylated at the C-terminus by CK2.

Its subcellular location is the endoplasmic reticulum membrane. The enzyme catalyses a sphingoid base + hexadecanoyl-CoA = an N-hexadecanoyl-sphingoid base + CoA + H(+). It carries out the reaction sphinganine + hexadecanoyl-CoA = N-hexadecanoylsphinganine + CoA + H(+). The catalysed reaction is hexadecasphinganine + hexadecanoyl-CoA = N-hexadecanoylhexadecasphinganine + CoA + H(+). It catalyses the reaction sphing-4-enine + hexadecanoyl-CoA = N-hexadecanoylsphing-4-enine + CoA + H(+). The enzyme catalyses 2-hydroxyhexadecanoyl-CoA + sphinganine = N-(2-hydroxyhexadecanoyl)-sphinganine + CoA + H(+). It carries out the reaction sphinganine + tetradecanoyl-CoA = N-(tetradecanoyl)-sphinganine + CoA + H(+). The catalysed reaction is sphinganine + octadecanoyl-CoA = N-(octadecanoyl)-sphinganine + CoA + H(+). It catalyses the reaction sphinganine + (9Z)-octadecenoyl-CoA = N-(9Z-octadecenoyl)-sphinganine + CoA + H(+). The enzyme catalyses a fatty acyl-CoA + sphing-4-enine = an N-acylsphing-4-enine + CoA + H(+). It functions in the pathway lipid metabolism; sphingolipid metabolism. With respect to regulation, inhibited by fumonisin B1. Its function is as follows. Ceramide synthase that catalyzes the transfer of the acyl chain from acyl-CoA to a sphingoid base, with high selectivity toward palmitoyl-CoA (hexadecanoyl-CoA; C16:0-CoA). Can use other acyl donors, but with less efficiency. N-acylates sphinganine and sphingosine bases to form dihydroceramides and ceramides in de novo synthesis and salvage pathways, respectively. Plays a role in de novo ceramide synthesis and surfactant homeostasis in pulmonary epithelia. This is Ceramide synthase 5 from Homo sapiens (Human).